Consider the following 355-residue polypeptide: Protein RecA (355 aa).

72–79 (GPESSGKT) contributes to the ATP binding site.

This sequence belongs to the RecA family.

The protein localises to the cytoplasm. Can catalyze the hydrolysis of ATP in the presence of single-stranded DNA, the ATP-dependent uptake of single-stranded DNA by duplex DNA, and the ATP-dependent hybridization of homologous single-stranded DNAs. It interacts with LexA causing its activation and leading to its autocatalytic cleavage. This Wolbachia sp. subsp. Brugia malayi (strain TRS) protein is Protein RecA.